We begin with the raw amino-acid sequence, 685 residues long: DNA-directed RNA polymerase subunit beta' (685 aa).

Zn(2+)-binding residues include cysteine 69, cysteine 71, cysteine 87, and cysteine 90. Mg(2+) contacts are provided by aspartate 489, aspartate 491, and aspartate 493.

It belongs to the RNA polymerase beta' chain family. RpoC1 subfamily. In plastids the minimal PEP RNA polymerase catalytic core is composed of four subunits: alpha, beta, beta', and beta''. When a (nuclear-encoded) sigma factor is associated with the core the holoenzyme is formed, which can initiate transcription. Mg(2+) is required as a cofactor. Requires Zn(2+) as cofactor.

The protein resides in the plastid. It localises to the chloroplast. It carries out the reaction RNA(n) + a ribonucleoside 5'-triphosphate = RNA(n+1) + diphosphate. In terms of biological role, DNA-dependent RNA polymerase catalyzes the transcription of DNA into RNA using the four ribonucleoside triphosphates as substrates. The protein is DNA-directed RNA polymerase subunit beta' of Gossypium hirsutum (Upland cotton).